We begin with the raw amino-acid sequence, 134 residues long: SNAPIN protein homolog (134 aa).

Residues 50–124 (QLQAELRGQL…EKEQRRRQAL (75 aa)) are a coiled coil.

Belongs to the SNAPIN family. In terms of assembly, component of the biogenesis of lysosome-related organelles complex-1 (BLOC-1) composed of Blos1, Blos2, Blos3, Blos4, Dysb, Muted, Pldn and Snapin. Interacts with Blos2 and Dysb.

It is found in the membrane. The protein localises to the cytoplasm. The protein resides in the cytosol. Its function is as follows. Component of the biogenesis of lysosome-related organelles complex-1 (BLOC-1) involved in pigment granule biogenesis. May participate in the coupling of lysosomes to microtubule plus-end-directed kinesin motor. The chain is SNAPIN protein homolog from Drosophila melanogaster (Fruit fly).